Here is a 426-residue protein sequence, read N- to C-terminus: Maintenance of mitochondrial morphology protein 1 (426 aa).

Residues 1 to 100 (MTDSENESTE…KFSGWSFAQG (100 aa)) lie on the Lumenal side of the membrane. Residues 101–121 (FFVGQLSIVLLFIFFLKFFIF) traverse the membrane as a helical segment. Over 122–426 (SDEPSKSKNP…NTREEKPTEL (305 aa)) the chain is Cytoplasmic. Residues 194–409 (PAESLDWFNV…EPRFQFVRLP (216 aa)) enclose the SMP-LTD domain.

This sequence belongs to the MMM1 family. Homodimer. Component of the ER-mitochondria encounter structure (ERMES) or MDM complex, composed of MMM1, MDM10, MDM12 and MDM34. An MMM1 homodimer associates with one molecule of MDM12 on each side in a pairwise head-to-tail manner, and the SMP-LTD domains of MMM1 and MDM12 generate a continuous hydrophobic tunnel for phospholipid trafficking.

It localises to the endoplasmic reticulum membrane. Component of the ERMES/MDM complex, which serves as a molecular tether to connect the endoplasmic reticulum (ER) and mitochondria. Components of this complex are involved in the control of mitochondrial shape and protein biogenesis, and function in nonvesicular lipid trafficking between the ER and mitochondria. The MDM12-MMM1 subcomplex functions in the major beta-barrel assembly pathway that is responsible for biogenesis of all outer membrane beta-barrel proteins, and acts in a late step after the SAM complex. The MDM10-MDM12-MMM1 subcomplex further acts in the TOM40-specific pathway after the action of the MDM12-MMM1 complex. Essential for establishing and maintaining the structure of mitochondria and maintenance of mtDNA nucleoids. This is Maintenance of mitochondrial morphology protein 1 from Saccharomyces cerevisiae (strain AWRI1631) (Baker's yeast).